The chain runs to 277 residues: Large ribosomal subunit protein uL2 (277 aa).

A disordered region spans residues 222-265 (GVAMNPIDHPHGGGEGRTSGGRHPVTPWGKPTKGKKTRTNKSTD).

This sequence belongs to the universal ribosomal protein uL2 family. In terms of assembly, part of the 50S ribosomal subunit. Forms a bridge to the 30S subunit in the 70S ribosome.

One of the primary rRNA binding proteins. Required for association of the 30S and 50S subunits to form the 70S ribosome, for tRNA binding and peptide bond formation. It has been suggested to have peptidyltransferase activity; this is somewhat controversial. Makes several contacts with the 16S rRNA in the 70S ribosome. This is Large ribosomal subunit protein uL2 from Bradyrhizobium sp. (strain BTAi1 / ATCC BAA-1182).